Reading from the N-terminus, the 242-residue chain is Intraflagellar transport-associated protein (242 aa).

Ser57 bears the Phosphoserine mark.

Interacts with IFT122; the interaction associates IFTAP with IFT-A complex.

Seems to play a role in ciliary BBSome localization, maybe through interaction with IFT-A complex. The chain is Intraflagellar transport-associated protein (IFTAP) from Bos taurus (Bovine).